Reading from the N-terminus, the 166-residue chain is Small ribosomal subunit protein uS5 (166 aa).

Residues 11–74 (LQEKLIAVNR…EKARRNMINV (64 aa)) form the S5 DRBM domain.

Belongs to the universal ribosomal protein uS5 family. As to quaternary structure, part of the 30S ribosomal subunit. Contacts proteins S4 and S8.

In terms of biological role, with S4 and S12 plays an important role in translational accuracy. Located at the back of the 30S subunit body where it stabilizes the conformation of the head with respect to the body. The polypeptide is Small ribosomal subunit protein uS5 (Cronobacter sakazakii (strain ATCC BAA-894) (Enterobacter sakazakii)).